We begin with the raw amino-acid sequence, 61 residues long: Protein translocase subunit SecE (61 aa).

A helical transmembrane segment spans residues Leu39–Leu59.

The protein belongs to the SecE/SEC61-gamma family. Component of the Sec protein translocase complex. Heterotrimer consisting of SecY (alpha), SecG (beta) and SecE (gamma) subunits. The heterotrimers can form oligomers, although 1 heterotrimer is thought to be able to translocate proteins. Interacts with the ribosome. May interact with SecDF, and other proteins may be involved.

It localises to the cell membrane. Functionally, essential subunit of the Sec protein translocation channel SecYEG. Clamps together the 2 halves of SecY. May contact the channel plug during translocation. In Pyrococcus horikoshii (strain ATCC 700860 / DSM 12428 / JCM 9974 / NBRC 100139 / OT-3), this protein is Protein translocase subunit SecE.